A 202-amino-acid polypeptide reads, in one-letter code: FMN-dependent NADH:quinone oxidoreductase (202 aa).

FMN contacts are provided by residues Ser12 and 21–23 (SFS).

Belongs to the azoreductase type 1 family. In terms of assembly, homodimer. The cofactor is FMN.

It carries out the reaction 2 a quinone + NADH + H(+) = 2 a 1,4-benzosemiquinone + NAD(+). The catalysed reaction is N,N-dimethyl-1,4-phenylenediamine + anthranilate + 2 NAD(+) = 2-(4-dimethylaminophenyl)diazenylbenzoate + 2 NADH + 2 H(+). Its function is as follows. Quinone reductase that provides resistance to thiol-specific stress caused by electrophilic quinones. Functionally, also exhibits azoreductase activity. Catalyzes the reductive cleavage of the azo bond in aromatic azo compounds to the corresponding amines. The polypeptide is FMN-dependent NADH:quinone oxidoreductase (Mycoplasma mobile (strain ATCC 43663 / 163K / NCTC 11711) (Mesomycoplasma mobile)).